The following is a 450-amino-acid chain: MSDSDGKNMEGRFEAAYIVDLVRLILERLSFVDFHRARCVSSTWYVASKSVIGVTNPTTPWIILFPNKNVENNGSCKLFDPHENKTYIIRDLGFDMSTSRCLASSGSWFLMFDHRADFHLLNLFTRERILLPSLESIDGERYMRFKRPISGSHIEIDKAVLWVDDKSRDYFVFCNLSSYVAYHHKRGDDNNSWKVLQPIKHQGCVDMVFKESKLYMISAHQCLTVFDFSGGVSPVEMECASFGSSVCVNRFHMKYFSNLAVTLSGEVLIIVGGKMDSSPEAKCVFTVNKMDPKSSEFTVLIKSIGDEALLLDLGITVPAKDGVMRDCIYFSNDQYHRCCGISLRDGYNADRICVYQIGSDYVVQEFEHLTTSSTKLFKDARWFFPTFGDKCCFHLWILHPVILQAKKLQKSNLKGTKPVTREKTTIVNNVDGTTTQREKTTKGKNMIGKK.

The region spanning 20–50 (DLVRLILERLSFVDFHRARCVSSTWYVASKS) is the F-box domain.

The protein localises to the cytoplasm. It is found in the nucleus. It localises to the nucleolus. In terms of biological role, component of SCF(ASK-cullin-F-box) E3 ubiquitin ligase complexes, which may mediate the ubiquitination and subsequent proteasomal degradation of target proteins. Required for brassinosteroid (BR) signal transduction. Mediates ASK7/BIN2/SK21 inactivation both by competing with substrate binding (e.g. BZR1) and by promoting its ubiquitination and subsequent proteasomal degradation. The chain is F-box protein KIB3 from Arabidopsis thaliana (Mouse-ear cress).